Consider the following 477-residue polypeptide: UDP-galactose-lipid carrier transferase (477 aa).

Helical transmembrane passes span 16 to 36 (SLALSDLIFFNIALALAIVLI), 52 to 72 (LDLKIATHILLSVICVGWFWV), 93 to 113 (TILIFSIVDLSVSALSKWELS), 115 to 135 (WIWILTWLLSMAMVPFGRACV), 175 to 195 (VIAFYDVDGSQTALELFGVPV), and 284 to 304 (FDLVGALSIITLLLPALVILI). Residues 305–477 (FMVSRDGGAP…GVVLKRDGAY (173 aa)) are Cytoplasmic-facing.

The protein belongs to the bacterial sugar transferase family.

Its subcellular location is the cell membrane. The protein operates within glycan metabolism; exopolysaccharide biosynthesis. Functionally, involved in the biosynthesis of amylovoran which functions as a virulence factor. May act as a sugar transferase and may be involved in the export of the repeating unit by flipping the lipid carrier to the periplasmic face of the inner membrane. This is UDP-galactose-lipid carrier transferase (amsG) from Erwinia amylovora (Fire blight bacteria).